We begin with the raw amino-acid sequence, 216 residues long: 3-keto-L-gulonate-6-phosphate decarboxylase UlaD (216 aa).

D11 contributes to the substrate binding site. Residues E33 and D62 each contribute to the Mg(2+) site. Substrate is bound at residue R192.

This sequence belongs to the HPS/KGPDC family. KGPDC subfamily. Homodimer. It depends on Mg(2+) as a cofactor.

The catalysed reaction is 3-dehydro-L-gulonate 6-phosphate + H(+) = L-xylulose 5-phosphate + CO2. It functions in the pathway cofactor degradation; L-ascorbate degradation; D-xylulose 5-phosphate from L-ascorbate: step 2/4. In terms of biological role, catalyzes the decarboxylation of 3-keto-L-gulonate-6-P into L-xylulose-5-P. Is involved in the anaerobic L-ascorbate utilization. The chain is 3-keto-L-gulonate-6-phosphate decarboxylase UlaD from Salmonella choleraesuis (strain SC-B67).